Here is a 436-residue protein sequence, read N- to C-terminus: GTPase Der (436 aa).

EngA-type G domains are found at residues 4 to 167 (PVVA…PKDA) and 175 to 351 (IKFS…DNHE). GTP is bound by residues 10 to 17 (GRPNVGKS), 57 to 61 (DTGGI), 119 to 122 (NKVD), 181 to 188 (GRPNVGKS), 229 to 233 (DTAGI), and 294 to 297 (NKWD). The 85-residue stretch at 352–436 (QRISSAVLND…PIHIIERRRK (85 aa)) folds into the KH-like domain.

The protein belongs to the TRAFAC class TrmE-Era-EngA-EngB-Septin-like GTPase superfamily. EngA (Der) GTPase family. As to quaternary structure, associates with the 50S ribosomal subunit.

Functionally, GTPase that plays an essential role in the late steps of ribosome biogenesis. This is GTPase Der from Ligilactobacillus salivarius (strain UCC118) (Lactobacillus salivarius).